The sequence spans 259 residues: Envelope biogenesis factor ElyC (259 aa).

Helical transmembrane passes span 12 to 32 (MLLP…LLWF) and 39 to 59 (GKIF…QPVA).

Its subcellular location is the cell inner membrane. Plays a critical role in the metabolism of the essential lipid carrier used for cell wall synthesis. The chain is Envelope biogenesis factor ElyC (elyC) from Escherichia coli O157:H7.